The chain runs to 426 residues: Endothelin-1 receptor (426 aa).

An N-terminal signal peptide occupies residues methionine 1–alanine 20. At aspartate 21–lysine 80 the chain is on the extracellular side. 2 N-linked (GlcNAc...) asparagine glycosylation sites follow: asparagine 29 and asparagine 62. A helical transmembrane segment spans residues tyrosine 81–leucine 102. The Cytoplasmic segment spans residues arginine 103 to arginine 112. The helical transmembrane segment at asparagine 113 to isoleucine 132 threads the bilayer. Residues aspartate 133–lysine 159 lie on the Extracellular side of the membrane. Residues cysteine 158 and cysteine 239 are joined by a disulfide bond. A helical transmembrane segment spans residues leucine 160–valine 181. Over aspartate 182–glutamate 205 the chain is Cytoplasmic. Residues isoleucine 206–phenylalanine 229 traverse the membrane as a helical segment. Topologically, residues glutamate 230–aspartate 256 are extracellular. A helical membrane pass occupies residues tryptophan 257–methionine 278. Over threonine 279–lysine 306 the chain is Cytoplasmic. The helical transmembrane segment at threonine 307–leucine 328 threads the bilayer. At lysine 329–leucine 347 the chain is on the extracellular side. The chain crosses the membrane as a helical span at residues leucine 348–valine 372. The Cytoplasmic portion of the chain corresponds to serine 373–asparagine 426. Phosphoserine is present on serine 424.

Belongs to the G-protein coupled receptor 1 family. Endothelin receptor subfamily. EDNRA sub-subfamily. Interacts with HDAC7 and KAT5. In terms of tissue distribution, predominantly expressed in vascular smooth muscle cells of a variety of issues, bronchial smooth muscle cells, myocardium, and the pituitary gland.

The protein resides in the cell membrane. Its function is as follows. Receptor for endothelin-1. Mediates its action by association with G proteins that activate a phosphatidylinositol-calcium second messenger system. The rank order of binding affinities for ET-A is: ET1 &gt; ET2 &gt;&gt; ET3. This is Endothelin-1 receptor from Rattus norvegicus (Rat).